Consider the following 97-residue polypeptide: Mitochondrial import inner membrane translocase subunit Tim8 A (97 aa).

The Twin CX3C motif motif lies at 43 to 66 (CWEKCMDKPGPKLDSRAEACFVNC). 2 disulfide bridges follow: cysteine 43–cysteine 66 and cysteine 47–cysteine 62. A phosphoserine mark is found at serine 57, serine 87, serine 94, and serine 96.

This sequence belongs to the small Tim family. In terms of assembly, heterohexamer; composed of 3 copies of TIMM8A and 3 copies of TIMM13, named soluble 70 kDa complex. Associates with the TIM22 complex, whose core is composed of TIMM22. In terms of tissue distribution, highly expressed in fetal and adult brain, followed by fetal lung, liver and kidney. Also expressed in heart, placenta, lung, liver, kidney, pancreas, skeletal muscle and heart.

The protein resides in the mitochondrion inner membrane. Functionally, mitochondrial intermembrane chaperone that participates in the import and insertion of some multi-pass transmembrane proteins into the mitochondrial inner membrane. Also required for the transfer of beta-barrel precursors from the TOM complex to the sorting and assembly machinery (SAM complex) of the outer membrane. Acts as a chaperone-like protein that protects the hydrophobic precursors from aggregation and guide them through the mitochondrial intermembrane space. The TIMM8-TIMM13 complex mediates the import of proteins such as TIMM23, SLC25A12/ARALAR1 and SLC25A13/ARALAR2, while the predominant TIMM9-TIMM10 70 kDa complex mediates the import of much more proteins. Probably necessary for normal neurologic development. This is Mitochondrial import inner membrane translocase subunit Tim8 A (TIMM8A) from Homo sapiens (Human).